The primary structure comprises 385 residues: GDP-D-glucose phosphorylase 1 (385 aa).

H218 functions as the Tele-GMP-histidine intermediate in the catalytic mechanism.

The protein belongs to the GDPGP1 family.

The protein resides in the cytoplasm. It carries out the reaction GDP-alpha-D-glucose + phosphate = alpha-D-glucose 1-phosphate + GDP + H(+). Functionally, specific and highly efficient GDP-D-glucose phosphorylase regulating the levels of GDP-D-glucose in cells. The sequence is that of GDP-D-glucose phosphorylase 1 (GDPGP1) from Bos taurus (Bovine).